Here is a 438-residue protein sequence, read N- to C-terminus: Xylose isomerase (438 aa).

Mg(2+) contacts are provided by Asp306 and Asp308.

It belongs to the xylose isomerase family. As to quaternary structure, homotetramer. Mg(2+) serves as cofactor.

It localises to the cytoplasm. The catalysed reaction is alpha-D-xylose = alpha-D-xylulofuranose. In Caldicellulosiruptor bescii (strain ATCC BAA-1888 / DSM 6725 / KCTC 15123 / Z-1320) (Anaerocellum thermophilum), this protein is Xylose isomerase.